Here is a 326-residue protein sequence, read N- to C-terminus: Glutamine synthetase (326 aa).

The 82-residue stretch at 4-85 folds into the GS beta-grasp domain; it reads FKLEYIWLDG…VMCEVMMPDG (82 aa). Residues 83-326 enclose the GS catalytic domain; it reads PDGHAHASNA…GDPYQIVRRF (244 aa). Residues Glu-107 and Glu-109 each contribute to the Mg(2+) site. Glu-164 provides a ligand contact to ATP. Residues Glu-169 and Glu-176 each contribute to the Mg(2+) site. Glu-275 is an L-glutamate binding site.

The protein belongs to the glutamine synthetase family. In terms of assembly, homooctamer and homotetramer. It depends on Mg(2+) as a cofactor.

The protein localises to the cytoplasm. The enzyme catalyses L-glutamate + NH4(+) + ATP = L-glutamine + ADP + phosphate + H(+). With respect to regulation, transferase activity is inhibited by NH(4)Cl. In terms of biological role, catalyzes the ATP-dependent biosynthesis of glutamine from glutamate and ammonia. The chain is Glutamine synthetase from Rhizobium leguminosarum bv. phaseoli.